The primary structure comprises 365 residues: IgG receptor FcRn large subunit p51 (365 aa).

Positions 1–23 (MGVPRPQPWALGLLLFLLPGSLG) are cleaved as a signal peptide. An alpha-1 region spans residues 24–110 (AESHLSLLYH…AFKALGGKGP (87 aa)). Topologically, residues 24–297 (AESHLSLLYH…VELESPAKSS (274 aa)) are extracellular. The alpha-2 stretch occupies residues 111-200 (YTLQGLLGCE…ERGRGNLEWK (90 aa)). 2 disulfide bridges follow: cysteine 119–cysteine 182 and cysteine 221–cysteine 275. Asparagine 125 carries N-linked (GlcNAc...) asparagine glycosylation. An alpha-3 region spans residues 201–290 (EPPSMRLKAR…GLAQPLRVEL (90 aa)). The region spanning 202–289 (PPSMRLKARP…AGLAQPLRVE (88 aa)) is the Ig-like C1-type domain. Residues 291–297 (ESPAKSS) form a connecting peptide region. Residues 298 to 321 (VLVVGIVIGVLLLTAAAVGGALLW) traverse the membrane as a helical segment. Residues 322 to 365 (RRMRSGLPAPWISLRGDDTGVLLPTPGEAQDADLKDVNVIPATA) are Cytoplasmic-facing. Residue serine 334 is modified to Phosphoserine.

This sequence belongs to the immunoglobulin superfamily. In terms of assembly, fcRn complex consists of two subunits: p51, and p14 which is equivalent to beta-2-microglobulin. It forms an MHC class I-like heterodimer. Interacts with albumin/ALB; this interaction regulates ALB homeostasis. (Microbial infection) Interacts with Echovirus 6, Echovirus 11 and Echovirus 30 capsid protein VP1. Expressed in full-term placenta, heart, lung, liver, muscle, kidney, pancreas, and both fetal and adult small intestine.

The protein localises to the cell membrane. It localises to the endosome membrane. In terms of biological role, cell surface receptor that transfers passive humoral immunity from the mother to the newborn. Binds to the Fc region of monomeric immunoglobulin gamma and mediates its selective uptake from milk. IgG in the milk is bound at the apical surface of the intestinal epithelium. The resultant FcRn-IgG complexes are transcytosed across the intestinal epithelium and IgG is released from FcRn into blood or tissue fluids. Throughout life, contributes to effective humoral immunity by recycling IgG and extending its half-life in the circulation. Mechanistically, monomeric IgG binding to FcRn in acidic endosomes of endothelial and hematopoietic cells recycles IgG to the cell surface where it is released into the circulation. In addition of IgG, regulates homeostasis of the other most abundant circulating protein albumin/ALB. (Microbial infection) Acts as an uncoating receptor for a panel of echoviruses including Echovirus 5, 6, 7, 9, 11, 13, 25 and 29. The protein is IgG receptor FcRn large subunit p51 (FCGRT) of Homo sapiens (Human).